The following is a 326-amino-acid chain: Fructokinase (326 aa).

The disordered stretch occupies residues 275–326; sequence EQALRNGPDPRRQSRRRHRLPRRRQSTLGARDWSLRLEQDSDPHPPDDTFSP. Basic residues predominate over residues 287 to 299; sequence QSRRRHRLPRRRQ. Residues 307–326 are compositionally biased toward basic and acidic residues; that stretch reads WSLRLEQDSDPHPPDDTFSP.

This sequence belongs to the carbohydrate kinase PfkB family.

The enzyme catalyses D-fructose + ATP = D-fructose 6-phosphate + ADP + H(+). In Rhizobium leguminosarum bv. trifolii, this protein is Fructokinase (frk).